We begin with the raw amino-acid sequence, 265 residues long: Ribosomal RNA small subunit methyltransferase A (265 aa).

Residues His11, Leu13, Gly38, Glu59, Asp83, and Asn100 each coordinate S-adenosyl-L-methionine.

The protein belongs to the class I-like SAM-binding methyltransferase superfamily. rRNA adenine N(6)-methyltransferase family. RsmA subfamily.

Its subcellular location is the cytoplasm. It catalyses the reaction adenosine(1518)/adenosine(1519) in 16S rRNA + 4 S-adenosyl-L-methionine = N(6)-dimethyladenosine(1518)/N(6)-dimethyladenosine(1519) in 16S rRNA + 4 S-adenosyl-L-homocysteine + 4 H(+). In terms of biological role, specifically dimethylates two adjacent adenosines (A1518 and A1519) in the loop of a conserved hairpin near the 3'-end of 16S rRNA in the 30S particle. May play a critical role in biogenesis of 30S subunits. The polypeptide is Ribosomal RNA small subunit methyltransferase A (Thermosynechococcus vestitus (strain NIES-2133 / IAM M-273 / BP-1)).